Here is a 130-residue protein sequence, read N- to C-terminus: NADH-quinone oxidoreductase subunit A (130 aa).

The next 3 membrane-spanning stretches (helical) occupy residues 17-37 (YIFVGLFFVVACFISCVMLAL), 74-94 (LVGILFIIFDLEIIFLFPWAV), and 99-119 (LGPAAFVSVLIFLIILTVGFV).

This sequence belongs to the complex I subunit 3 family. As to quaternary structure, NDH-1 is composed of 14 different subunits. Subunits NuoA, H, J, K, L, M, N constitute the membrane sector of the complex.

Its subcellular location is the cell inner membrane. It catalyses the reaction a quinone + NADH + 5 H(+)(in) = a quinol + NAD(+) + 4 H(+)(out). In terms of biological role, NDH-1 shuttles electrons from NADH, via FMN and iron-sulfur (Fe-S) centers, to quinones in the respiratory chain. The immediate electron acceptor for the enzyme in this species is believed to be ubiquinone. Couples the redox reaction to proton translocation (for every two electrons transferred, four hydrogen ions are translocated across the cytoplasmic membrane), and thus conserves the redox energy in a proton gradient. This chain is NADH-quinone oxidoreductase subunit A, found in Neorickettsia sennetsu (strain ATCC VR-367 / Miyayama) (Ehrlichia sennetsu).